A 257-amino-acid chain; its full sequence is V-type proton ATPase subunit D (257 aa).

Positions 215–257 (KEQEAAQKALEGPGPGEDAAHSENNPPRNLLASEEDNLPVLFN) are disordered.

The protein belongs to the V-ATPase D subunit family. As to quaternary structure, V-ATPase is a heteromultimeric enzyme made up of two complexes: the ATP-hydrolytic V1 complex and the proton translocation V0 complex. The V1 complex consists of three catalytic AB heterodimers that form a heterohexamer, three peripheral stalks each consisting of EG heterodimers, one central rotor including subunits D and F, and the regulatory subunits C and H. The proton translocation complex V0 consists of the proton transport subunit a, a ring of proteolipid subunits c9c'', rotary subunit d, subunits e and f, and the accessory subunits vah-19/Ac45 and vah-20/PRR.

Its function is as follows. Subunit of the V1 complex of vacuolar(H+)-ATPase (V-ATPase), a multisubunit enzyme composed of a peripheral complex (V1) that hydrolyzes ATP and a membrane integral complex (V0) that translocates protons. V-ATPase is responsible for acidifying and maintaining the pH of intracellular compartments and in some cell types, is targeted to the plasma membrane, where it is responsible for acidifying the extracellular environment. This chain is V-type proton ATPase subunit D, found in Caenorhabditis elegans.